The primary structure comprises 308 residues: Methionyl-tRNA formyltransferase (308 aa).

Serine 110–proline 113 contacts (6S)-5,6,7,8-tetrahydrofolate.

It belongs to the Fmt family.

The enzyme catalyses L-methionyl-tRNA(fMet) + (6R)-10-formyltetrahydrofolate = N-formyl-L-methionyl-tRNA(fMet) + (6S)-5,6,7,8-tetrahydrofolate + H(+). In terms of biological role, attaches a formyl group to the free amino group of methionyl-tRNA(fMet). The formyl group appears to play a dual role in the initiator identity of N-formylmethionyl-tRNA by promoting its recognition by IF2 and preventing the misappropriation of this tRNA by the elongation apparatus. The polypeptide is Methionyl-tRNA formyltransferase (Neisseria meningitidis serogroup B (strain ATCC BAA-335 / MC58)).